The primary structure comprises 65 residues: Hirudin-3A (65 aa).

The tract at residues 1-3 (VVY) is interaction with thrombin active site. 3 disulfide bridges follow: Cys6/Cys14, Cys16/Cys28, and Cys22/Cys39. The tract at residues 39–65 (CVTGEGTPKPQSHNDGDFEEIPEEYLQ) is disordered. O-linked (GalNAc...) threonine glycosylation occurs at Thr45. The interaction with fibrinogen-binding exosite of thrombin stretch occupies residues 55-65 (DFEEIPEEYLQ). The span at 55 to 65 (DFEEIPEEYLQ) shows a compositional bias: acidic residues. Tyr63 is modified (sulfotyrosine).

Belongs to the protease inhibitor I14 (hirudin) family.

It is found in the secreted. In terms of biological role, hirudin is a potent thrombin-specific protease inhibitor. It forms a stable non-covalent complex with alpha-thrombin, thereby abolishing its ability to cleave fibrinogen. The protein is Hirudin-3A of Hirudo medicinalis (Medicinal leech).